Reading from the N-terminus, the 365-residue chain is 3-isopropylmalate dehydrogenase (365 aa).

80 to 91 contributes to the NAD(+) binding site; it reads GPKWGTGAVRPE. Residues Arg98, Arg108, Arg137, and Asp226 each coordinate substrate. Positions 226, 251, and 255 each coordinate Mg(2+). 290–301 contributes to the NAD(+) binding site; that stretch reads GSAPDLPKGKVN.

This sequence belongs to the isocitrate and isopropylmalate dehydrogenases family. Homodimer. The cofactor is Mg(2+). Requires Mn(2+) as cofactor.

Its subcellular location is the cytoplasm. It carries out the reaction (2R,3S)-3-isopropylmalate + NAD(+) = 4-methyl-2-oxopentanoate + CO2 + NADH. It participates in amino-acid biosynthesis; L-leucine biosynthesis; L-leucine from 3-methyl-2-oxobutanoate: step 3/4. Catalyzes the oxidation of 3-carboxy-2-hydroxy-4-methylpentanoate (3-isopropylmalate) to 3-carboxy-4-methyl-2-oxopentanoate. The product decarboxylates to 4-methyl-2 oxopentanoate. The sequence is that of 3-isopropylmalate dehydrogenase (LEU2) from Candida glabrata (strain ATCC 2001 / BCRC 20586 / JCM 3761 / NBRC 0622 / NRRL Y-65 / CBS 138) (Yeast).